We begin with the raw amino-acid sequence, 275 residues long: Large ribosomal subunit protein uL2 (275 aa).

The interval 222-275 (GVAMNPVDHPMGGGEGRSSGGRHPCSPWGMPTKGYKTRKNKTTDKFIVRKRNKR) is disordered.

This sequence belongs to the universal ribosomal protein uL2 family. In terms of assembly, part of the 50S ribosomal subunit. Forms a bridge to the 30S subunit in the 70S ribosome.

Functionally, one of the primary rRNA binding proteins. Required for association of the 30S and 50S subunits to form the 70S ribosome, for tRNA binding and peptide bond formation. It has been suggested to have peptidyltransferase activity; this is somewhat controversial. Makes several contacts with the 16S rRNA in the 70S ribosome. The chain is Large ribosomal subunit protein uL2 from Desulfatibacillum aliphaticivorans.